Consider the following 969-residue polypeptide: RNA polymerase-associated protein RapA (969 aa).

Residues 164-334 (EVGRRHAPRV…FARLRLLDAD (171 aa)) form the Helicase ATP-binding domain. An ATP-binding site is contributed by 177–184 (DEVGLGKT). The short motif at 280 to 283 (DEAH) is the DEAH box element. The 155-residue stretch at 492-646 (RVNWLLEKVK…TCPTGRAVYD (155 aa)) folds into the Helicase C-terminal domain.

Belongs to the SNF2/RAD54 helicase family. RapA subfamily. As to quaternary structure, interacts with the RNAP. Has a higher affinity for the core RNAP than for the holoenzyme. Its ATPase activity is stimulated by binding to RNAP.

Its function is as follows. Transcription regulator that activates transcription by stimulating RNA polymerase (RNAP) recycling in case of stress conditions such as supercoiled DNA or high salt concentrations. Probably acts by releasing the RNAP, when it is trapped or immobilized on tightly supercoiled DNA. Does not activate transcription on linear DNA. Probably not involved in DNA repair. The chain is RNA polymerase-associated protein RapA from Vibrio cholerae serotype O1 (strain ATCC 39315 / El Tor Inaba N16961).